Reading from the N-terminus, the 66-residue chain is Moricin-2 (66 aa).

Residues 1–24 (MNILKLFFVFIVAMSLVSCSTAAP) form the signal peptide.

In terms of tissue distribution, expressed in fat body and to a lesser extent in hemocyte and Malpighian tubules.

It is found in the secreted. Has antibacterial activity against Gram-positive and Gram-negative bacteria. Probably acts by disturbing membrane functions with its amphipathic structure. This Bombyx mori (Silk moth) protein is Moricin-2 (MOR2).